The sequence spans 258 residues: Imidazole glycerol phosphate synthase subunit HisF (258 aa).

Residues aspartate 11 and aspartate 130 contribute to the active site.

The protein belongs to the HisA/HisF family. Heterodimer of HisH and HisF.

It is found in the cytoplasm. The enzyme catalyses 5-[(5-phospho-1-deoxy-D-ribulos-1-ylimino)methylamino]-1-(5-phospho-beta-D-ribosyl)imidazole-4-carboxamide + L-glutamine = D-erythro-1-(imidazol-4-yl)glycerol 3-phosphate + 5-amino-1-(5-phospho-beta-D-ribosyl)imidazole-4-carboxamide + L-glutamate + H(+). It participates in amino-acid biosynthesis; L-histidine biosynthesis; L-histidine from 5-phospho-alpha-D-ribose 1-diphosphate: step 5/9. Functionally, IGPS catalyzes the conversion of PRFAR and glutamine to IGP, AICAR and glutamate. The HisF subunit catalyzes the cyclization activity that produces IGP and AICAR from PRFAR using the ammonia provided by the HisH subunit. This is Imidazole glycerol phosphate synthase subunit HisF from Rhodopseudomonas palustris (strain BisB18).